The sequence spans 394 residues: Tyrosine--tRNA ligase, cytoplasmic (394 aa).

Position 2 is an N-acetylserine (serine 2). Tyrosine 43 is a binding site for L-tyrosine. A 'HIGH' region motif is present at residues 48–56 (PTGRPHCGY). L-tyrosine contacts are provided by tyrosine 170, glutamine 174, aspartate 177, and glutamine 192. The 'KMSKS' region motif lies at 227-231 (KMSAS). Phosphoserine is present on serine 235. The disordered stretch occupies residues 348–394 (QEASEKGYPVATPQKSKKAKKPKNKGTKYPGATKTNEIATKLEETKL). Threonine 359 is modified (phosphothreonine). The Nuclear localization signal signature appears at 360-378 (PQKSKKAKKPKNKGTKYPG). Over residues 362–373 (KSKKAKKPKNKG) the composition is skewed to basic residues.

This sequence belongs to the class-I aminoacyl-tRNA synthetase family. As to quaternary structure, homodimer. Interacts with KNR4/SMI1.

It is found in the cytoplasm. The protein localises to the nucleus. It catalyses the reaction tRNA(Tyr) + L-tyrosine + ATP = L-tyrosyl-tRNA(Tyr) + AMP + diphosphate + H(+). Its activity is regulated as follows. Inhibited by N-ethylmaleimide and p-chloromercuribenzoate. Catalyzes the attachment of L-tyrosine to tRNA(Tyr) in a two-step reaction: L-tyrosine is first activated by ATP to form Tyr-AMP and then transferred to the acceptor end of tRNA(Tyr). The specificity determinants on tRNA(Tyr) are the base pair C1-G72, the discriminator residue A73, and the three anticodon bases G34, U35 and A36. Also involved in nuclear tRNA export. Also attaches D-Tyr to tRNA(Tyr), this reaction is about 150-fold less efficient than attachment of L-Tyr. This Saccharomyces cerevisiae (strain ATCC 204508 / S288c) (Baker's yeast) protein is Tyrosine--tRNA ligase, cytoplasmic.